Here is a 288-residue protein sequence, read N- to C-terminus: Acetyl-coenzyme A carboxylase carboxyl transferase subunit beta (288 aa).

Residues 34–288 (LFAKCPACKH…HLVAFHGGVS (255 aa)) enclose the CoA carboxyltransferase N-terminal domain. Zn(2+)-binding residues include Cys38, Cys41, Cys56, and Cys59. The C4-type zinc-finger motif lies at 38-59 (CPACKHMIYQKDLGPAKICPTC).

It belongs to the AccD/PCCB family. As to quaternary structure, acetyl-CoA carboxylase is a heterohexamer composed of biotin carboxyl carrier protein (AccB), biotin carboxylase (AccC) and two subunits each of ACCase subunit alpha (AccA) and ACCase subunit beta (AccD). The cofactor is Zn(2+).

It is found in the cytoplasm. The enzyme catalyses N(6)-carboxybiotinyl-L-lysyl-[protein] + acetyl-CoA = N(6)-biotinyl-L-lysyl-[protein] + malonyl-CoA. The protein operates within lipid metabolism; malonyl-CoA biosynthesis; malonyl-CoA from acetyl-CoA: step 1/1. Functionally, component of the acetyl coenzyme A carboxylase (ACC) complex. Biotin carboxylase (BC) catalyzes the carboxylation of biotin on its carrier protein (BCCP) and then the CO(2) group is transferred by the transcarboxylase to acetyl-CoA to form malonyl-CoA. The protein is Acetyl-coenzyme A carboxylase carboxyl transferase subunit beta of Streptococcus equi subsp. zooepidemicus (strain MGCS10565).